The chain runs to 51 residues: Ribosome biogenesis protein Nop10 (51 aa).

Belongs to the NOP10 family.

Its function is as follows. Involved in ribosome biogenesis; more specifically in 18S rRNA pseudouridylation and in cleavage of pre-rRNA. The sequence is that of Ribosome biogenesis protein Nop10 from Methanosarcina barkeri (strain Fusaro / DSM 804).